Consider the following 207-residue polypeptide: Cilia- and flagella-associated protein 418 (207 aa).

Positions 1–75 (MAEDLDELLD…LINEILEEPN (75 aa)) are required for interaction with FAM161A. A disordered region spans residues 26–52 (MVEQPKGCGGGTHSSDRNQAKAKETLR). Basic and acidic residues predominate over residues 39–52 (SSDRNQAKAKETLR).

Interacts (via N-terminus) with FAM161A (via central region); the interaction is direct. In terms of tissue distribution, widely expressed, with highest levels in heart and brain. Also expressed in the retina (at protein level).

The protein resides in the cytoplasm. It is found in the photoreceptor inner segment. Its function is as follows. May be involved in photoreceptor outer segment disk morphogenesis. In Homo sapiens (Human), this protein is Cilia- and flagella-associated protein 418.